Reading from the N-terminus, the 425-residue chain is UDP-N-acetyl-D-glucosamine 6-dehydrogenase (425 aa).

NAD(+)-binding residues include Val17, Asp35, Arg40, Thr86, and Thr121. Cys261 functions as the Nucleophile in the catalytic mechanism. Arg332 is an NAD(+) binding site.

This sequence belongs to the UDP-glucose/GDP-mannose dehydrogenase family. Homotrimer.

The enzyme catalyses UDP-N-acetyl-alpha-D-glucosamine + 2 NAD(+) + H2O = UDP-2-acetamido-2-deoxy-alpha-D-glucuronate + 2 NADH + 3 H(+). It functions in the pathway capsule biogenesis; capsule polysaccharide biosynthesis. The protein operates within glycan metabolism; Vi-antigen biosynthesis. Dehydrogenase required for the biosynthesis of the capsular polysaccharide, commonly referred as the Vi antigen, an important virulence factor. Catalyzes the conversion of UDP-N-acetylglucosamine (UDP-GlcNAc) to UDP-N-acetylglucosaminuronic acid (UDP-GlcNAcA). Cannot use UDP-GalNAc, UDP-Glc and UDP-Gal as substrates. This Salmonella typhi protein is UDP-N-acetyl-D-glucosamine 6-dehydrogenase.